The sequence spans 209 residues: NADH-quinone oxidoreductase subunit C (209 aa).

The protein belongs to the complex I 30 kDa subunit family. As to quaternary structure, NDH-1 is composed of 14 different subunits. Subunits NuoB, C, D, E, F, and G constitute the peripheral sector of the complex.

It is found in the cell inner membrane. It carries out the reaction a quinone + NADH + 5 H(+)(in) = a quinol + NAD(+) + 4 H(+)(out). In terms of biological role, NDH-1 shuttles electrons from NADH, via FMN and iron-sulfur (Fe-S) centers, to quinones in the respiratory chain. The immediate electron acceptor for the enzyme in this species is believed to be ubiquinone. Couples the redox reaction to proton translocation (for every two electrons transferred, four hydrogen ions are translocated across the cytoplasmic membrane), and thus conserves the redox energy in a proton gradient. The sequence is that of NADH-quinone oxidoreductase subunit C from Phenylobacterium zucineum (strain HLK1).